Here is a 496-residue protein sequence, read N- to C-terminus: tRNA-2-methylthio-N(6)-dimethylallyladenosine synthase (496 aa).

Positions 43–160 constitute an MTTase N-terminal domain; it reads KKVFVTTQGC…LPELYDQSHQ (118 aa). Cysteine 52, cysteine 89, cysteine 123, cysteine 204, cysteine 208, and cysteine 211 together coordinate [4Fe-4S] cluster. The Radical SAM core domain maps to 190 to 422; sequence RVEGFKAFVS…QKVIIDSTLA (233 aa). Residues 425 to 493 form the TRAM domain; it reads HEMVGTTTRV…PHMVKGEIEA (69 aa).

This sequence belongs to the methylthiotransferase family. MiaB subfamily. In terms of assembly, monomer. [4Fe-4S] cluster is required as a cofactor.

It localises to the cytoplasm. The enzyme catalyses N(6)-dimethylallyladenosine(37) in tRNA + (sulfur carrier)-SH + AH2 + 2 S-adenosyl-L-methionine = 2-methylsulfanyl-N(6)-dimethylallyladenosine(37) in tRNA + (sulfur carrier)-H + 5'-deoxyadenosine + L-methionine + A + S-adenosyl-L-homocysteine + 2 H(+). In terms of biological role, catalyzes the methylthiolation of N6-(dimethylallyl)adenosine (i(6)A), leading to the formation of 2-methylthio-N6-(dimethylallyl)adenosine (ms(2)i(6)A) at position 37 in tRNAs that read codons beginning with uridine. In Psychrobacter arcticus (strain DSM 17307 / VKM B-2377 / 273-4), this protein is tRNA-2-methylthio-N(6)-dimethylallyladenosine synthase.